A 262-amino-acid chain; its full sequence is ATP synthase subunit a (262 aa).

7 consecutive transmembrane segments (helical) span residues Ile30 to Phe50, Trp64 to Gly84, Leu91 to Gly111, Ile123 to Ser143, Phe149 to Ile169, Leu195 to Leu215, and Ile220 to Leu240.

This sequence belongs to the ATPase A chain family. As to quaternary structure, F-type ATPases have 2 components, CF(1) - the catalytic core - and CF(0) - the membrane proton channel. CF(1) has five subunits: alpha(3), beta(3), gamma(1), delta(1), epsilon(1). CF(0) has three main subunits: a, b and c.

The protein resides in the mitochondrion inner membrane. Functionally, mitochondrial membrane ATP synthase (F(1)F(0) ATP synthase or Complex V) produces ATP from ADP in the presence of a proton gradient across the membrane which is generated by electron transport complexes of the respiratory chain. F-type ATPases consist of two structural domains, F(1) - containing the extramembraneous catalytic core and F(0) - containing the membrane proton channel, linked together by a central stalk and a peripheral stalk. During catalysis, ATP synthesis in the catalytic domain of F(1) is coupled via a rotary mechanism of the central stalk subunits to proton translocation. Key component of the proton channel; it may play a direct role in the translocation of protons across the membrane. The sequence is that of ATP synthase subunit a (ATP6) from Allomyces macrogynus.